The primary structure comprises 207 residues: Macrophage immunometabolism regulator (207 aa).

M1 carries the post-translational modification N-acetylmethionine. Residues 1–41 (MEVDINGDSRSTLTTLPLPVAEGSSPGKAEAEKPRCSSTPC) form a disordered region. Phosphoserine is present on residues S25 and S167.

The protein belongs to the UNC119-binding protein family. In terms of assembly, interacts with UNC119 and UNC119B; interaction preferentially takes place when UNC119 and UNC119B are unliganded with myristoylated proteins. Highly expressed in photoreceptors.

It is found in the cytoplasm. Its subcellular location is the cell projection. The protein localises to the cilium. Its function is as follows. Regulates the macrophage function, by enhancing the resolution of inflammation and wound repair functions mediated by M2 macrophages. The regulation of macrophage function is, due at least in part, to its ability to inhibit glycolysis. May also play a role in trafficking of proteins via its interaction with UNC119 and UNC119B cargo adapters: may help the release of UNC119 and UNC119B cargo or the recycling of UNC119 and UNC119B. May play a role in ciliary membrane localization via its interaction with UNC119B and protein transport into photoreceptor cells. The protein is Macrophage immunometabolism regulator of Mus musculus (Mouse).